Here is a 186-residue protein sequence, read N- to C-terminus: Inner membrane-spanning protein YciB (186 aa).

5 consecutive transmembrane segments (helical) span residues 10–30 (IILF…AVAI), 47–67 (VEPL…ATLL), 76–96 (WKPT…QLMF), 121–141 (WGWT…AYHF), and 149–169 (FKLF…ALYL).

Belongs to the YciB family.

It localises to the cell inner membrane. Functionally, plays a role in cell envelope biogenesis, maintenance of cell envelope integrity and membrane homeostasis. This Acidovorax ebreus (strain TPSY) (Diaphorobacter sp. (strain TPSY)) protein is Inner membrane-spanning protein YciB.